We begin with the raw amino-acid sequence, 435 residues long: ATP-dependent protease ATPase subunit HslU (435 aa).

ATP contacts are provided by residues isoleucine 18, 60–65 (GVGKTE), aspartate 248, glutamate 313, and arginine 385.

It belongs to the ClpX chaperone family. HslU subfamily. In terms of assembly, a double ring-shaped homohexamer of HslV is capped on each side by a ring-shaped HslU homohexamer. The assembly of the HslU/HslV complex is dependent on binding of ATP.

It is found in the cytoplasm. Its function is as follows. ATPase subunit of a proteasome-like degradation complex; this subunit has chaperone activity. The binding of ATP and its subsequent hydrolysis by HslU are essential for unfolding of protein substrates subsequently hydrolyzed by HslV. HslU recognizes the N-terminal part of its protein substrates and unfolds these before they are guided to HslV for hydrolysis. This Ruegeria pomeroyi (strain ATCC 700808 / DSM 15171 / DSS-3) (Silicibacter pomeroyi) protein is ATP-dependent protease ATPase subunit HslU.